The sequence spans 325 residues: Melanocortin receptor 5 (325 aa).

At 1 to 37 the chain is on the extracellular side; it reads MNSSFHLHFLDLGLNATEGNLSGLSVRNASSPCEDMG. N-linked (GlcNAc...) asparagine glycosylation is found at N2, N15, N20, and N28. Residues 38-61 traverse the membrane as a helical segment; sequence IAVEVFLALGLISLLENILVIGAI. The Cytoplasmic segment spans residues 62 to 73; it reads VRNRNLHIPMYF. A helical transmembrane segment spans residues 74-97; the sequence is FVGSLAVADMLVSLSNFWETITIY. Residues 98 to 114 are Extracellular-facing; sequence LLTNKHLVMADASVRHL. Residues 115–138 traverse the membrane as a helical segment; it reads DNVFDSMICISVVASMCSLLAIAV. Over 139–155 the chain is Cytoplasmic; the sequence is DRYVTIFCRLRYQRIMT. A helical transmembrane segment spans residues 156 to 179; that stretch reads GRRSGAIIAGIWAFCTSCGTVFIV. The Extracellular portion of the chain corresponds to 180–186; it reads YYESTYV. Residues 187 to 211 form a helical membrane-spanning segment; it reads VVCLIAMFLTMLLLMASLYTHMFLL. Residues 212–239 are Cytoplasmic-facing; the sequence is ARTHVRRIAALPGHSSVRQRTGVKGAIT. The chain crosses the membrane as a helical span at residues 240–265; the sequence is LAMLLGVFIICWAPFFLHLILMISCP. At 266-273 the chain is on the extracellular side; that stretch reads QNLYCSCF. A helical membrane pass occupies residues 274–297; it reads MSHFNMYLILIMCNSVIDPLIYAF. The Cytoplasmic segment spans residues 298–325; the sequence is RSQEMRKTFKEIVCFQGFRTPCRFPSTY. C311 carries the S-palmitoyl cysteine lipid modification.

It belongs to the G-protein coupled receptor 1 family.

The protein localises to the cell membrane. Receptor for MSH (alpha, beta and gamma) and ACTH. The activity of this receptor is mediated by G proteins which activate adenylate cyclase. This receptor is a possible mediator of the immunomodulation properties of melanocortins. The sequence is that of Melanocortin receptor 5 (MC5R) from Ovis aries (Sheep).